The chain runs to 236 residues: Purine nucleoside phosphorylase (236 aa).

His5 lines the a purine D-ribonucleoside pocket. Residues Gly21, Arg25, Arg43, and 86-89 (RYGT) each bind phosphate. A purine D-ribonucleoside-binding positions include Glu163, 180–182 (EME), and 204–205 (SD).

This sequence belongs to the PNP/UDP phosphorylase family. As to quaternary structure, homohexamer; disulfide-linked. Trimer of homodimers, with three symmetric intersubunit disulfide bonds linking the dimers to one another.

It catalyses the reaction S-methyl-5'-thioadenosine + phosphate = 5-(methylsulfanyl)-alpha-D-ribose 1-phosphate + adenine. It carries out the reaction a purine D-ribonucleoside + phosphate = a purine nucleobase + alpha-D-ribose 1-phosphate. The catalysed reaction is a purine 2'-deoxy-D-ribonucleoside + phosphate = a purine nucleobase + 2-deoxy-alpha-D-ribose 1-phosphate. The protein operates within purine metabolism; purine nucleoside salvage. Functionally, cleavage of guanosine or inosine to respective bases and sugar-1-phosphate molecules. Cleaves inosine, guanosine, and adenosine with a better efficiency than MTA. This chain is Purine nucleoside phosphorylase, found in Saccharolobus solfataricus (strain ATCC 35092 / DSM 1617 / JCM 11322 / P2) (Sulfolobus solfataricus).